A 505-amino-acid polypeptide reads, in one-letter code: RNA-splicing ligase RtcB homolog (505 aa).

Residues D119, C122, H227, H259, and H353 each contribute to the Mn(2+) site. A GMP-binding site is contributed by 226–230 (NHYAE). GMP contacts are provided by residues 353–354 (HN), 402–405 (GGTM), S409, 428–431 (HGAG), and K504. Residue H428 is the GMP-histidine intermediate of the active site.

It belongs to the RtcB family. Catalytic component of the tRNA-splicing ligase complex. Requires Mn(2+) as cofactor.

It localises to the nucleus. Its subcellular location is the cytoplasm. The catalysed reaction is a 3'-end 3'-phospho-ribonucleotide-RNA + a 5'-end dephospho-ribonucleoside-RNA + GTP = a ribonucleotidyl-ribonucleotide-RNA + GMP + diphosphate. The enzyme catalyses a 3'-end 2',3'-cyclophospho-ribonucleotide-RNA + a 5'-end dephospho-ribonucleoside-RNA + GTP + H2O = a ribonucleotidyl-ribonucleotide-RNA + GMP + diphosphate + H(+). In terms of biological role, catalytic subunit of the tRNA-splicing ligase complex that acts by directly joining spliced tRNA halves to mature-sized tRNAs by incorporating the precursor-derived splice junction phosphate into the mature tRNA as a canonical 3',5'-phosphodiester. May act as an RNA ligase with broad substrate specificity, and may function toward other RNAs. The polypeptide is RNA-splicing ligase RtcB homolog (Danio rerio (Zebrafish)).